Consider the following 256-residue polypeptide: uncharacterized protein (256 aa).

Residues alanine 201–glycine 214 show a composition bias toward basic and acidic residues. The tract at residues alanine 201 to serine 231 is disordered. The span at glycine 215 to serine 231 shows a compositional bias: acidic residues.

It is found in the mitochondrion. This is an uncharacterized protein from Zea mays (Maize).